The following is a 311-amino-acid chain: Probable manganese-dependent inorganic pyrophosphatase (311 aa).

Mn(2+)-binding residues include His-9, Asp-13, Asp-15, Asp-77, His-99, and Asp-151.

This sequence belongs to the PPase class C family. Mn(2+) serves as cofactor.

It is found in the cytoplasm. The enzyme catalyses diphosphate + H2O = 2 phosphate + H(+). This chain is Probable manganese-dependent inorganic pyrophosphatase, found in Streptococcus pneumoniae (strain JJA).